Here is a 147-residue protein sequence, read N- to C-terminus: Large ribosomal subunit protein uL22 (147 aa).

A disordered region spans residues 110 to 147 (EEKKTVAKKAPAAKKTTTTKAPAKKTTSTKKATAKKES). Over residues 117 to 140 (KKAPAAKKTTTTKAPAKKTTSTKK) the composition is skewed to low complexity.

The protein belongs to the universal ribosomal protein uL22 family. In terms of assembly, part of the 50S ribosomal subunit.

In terms of biological role, this protein binds specifically to 23S rRNA; its binding is stimulated by other ribosomal proteins, e.g. L4, L17, and L20. It is important during the early stages of 50S assembly. It makes multiple contacts with different domains of the 23S rRNA in the assembled 50S subunit and ribosome. Functionally, the globular domain of the protein is located near the polypeptide exit tunnel on the outside of the subunit, while an extended beta-hairpin is found that lines the wall of the exit tunnel in the center of the 70S ribosome. The polypeptide is Large ribosomal subunit protein uL22 (Campylobacter jejuni subsp. jejuni serotype O:23/36 (strain 81-176)).